A 231-amino-acid chain; its full sequence is UPF0702 transmembrane protein YetF (231 aa).

The next 3 membrane-spanning stretches (helical) occupy residues 5 to 25, 33 to 53, and 59 to 79; these read LSVA…LKLL, ITPF…NAVY, and IKEI…IEFI.

Belongs to the UPF0702 family.

It is found in the cell membrane. In Bacillus subtilis (strain 168), this protein is UPF0702 transmembrane protein YetF (yetF).